The chain runs to 104 residues: L-rhamnose mutarotase (104 aa).

Tyr-18 provides a ligand contact to substrate. The active-site Proton donor is the His-22. Residues Tyr-41 and 76 to 77 (WW) contribute to the substrate site.

This sequence belongs to the rhamnose mutarotase family. In terms of assembly, homodimer.

The protein localises to the cytoplasm. It carries out the reaction alpha-L-rhamnose = beta-L-rhamnose. Its pathway is carbohydrate metabolism; L-rhamnose metabolism. In terms of biological role, involved in the anomeric conversion of L-rhamnose. In Bacillus subtilis (strain 168), this protein is L-rhamnose mutarotase.